A 361-amino-acid chain; its full sequence is Polyribonucleotide 5'-hydroxyl-kinase PH0197 (361 aa).

43–50 lines the ATP pocket; the sequence is GDVDTGKT.

The cofactor is a divalent metal cation.

It catalyses the reaction a 5'-end dephospho-2'-deoxyribonucleoside-DNA + ATP = a 5'-end 5'-phospho-2'-deoxyribonucleoside-DNA + ADP + H(+). It carries out the reaction a 5'-end dephospho-ribonucleoside-RNA + ATP = a 5'-end 5'-phospho-ribonucleoside-RNA + ADP + H(+). DNA kinase activity is inhibited by 250 mM sodium chloride whereas RNA kinase activity is unaffected. Functionally, polynucleotide kinase that can phosphorylate the 5'-hydroxyl groups of both single-stranded RNA (ssRNA) and single-stranded DNA (ssDNA). Exhibits a strong preference for ssRNA. In Pyrococcus horikoshii (strain ATCC 700860 / DSM 12428 / JCM 9974 / NBRC 100139 / OT-3), this protein is Polyribonucleotide 5'-hydroxyl-kinase PH0197.